The sequence spans 163 residues: Crossover junction endodeoxyribonuclease RuvC (163 aa).

Active-site residues include aspartate 7, glutamate 67, and aspartate 140. Residues aspartate 7, glutamate 67, and aspartate 140 each coordinate Mg(2+).

The protein belongs to the RuvC family. Homodimer which binds Holliday junction (HJ) DNA. The HJ becomes 2-fold symmetrical on binding to RuvC with unstacked arms; it has a different conformation from HJ DNA in complex with RuvA. In the full resolvosome a probable DNA-RuvA(4)-RuvB(12)-RuvC(2) complex forms which resolves the HJ. Requires Mg(2+) as cofactor.

It localises to the cytoplasm. The enzyme catalyses Endonucleolytic cleavage at a junction such as a reciprocal single-stranded crossover between two homologous DNA duplexes (Holliday junction).. Its function is as follows. The RuvA-RuvB-RuvC complex processes Holliday junction (HJ) DNA during genetic recombination and DNA repair. Endonuclease that resolves HJ intermediates. Cleaves cruciform DNA by making single-stranded nicks across the HJ at symmetrical positions within the homologous arms, yielding a 5'-phosphate and a 3'-hydroxyl group; requires a central core of homology in the junction. The consensus cleavage sequence is 5'-(A/T)TT(C/G)-3'. Cleavage occurs on the 3'-side of the TT dinucleotide at the point of strand exchange. HJ branch migration catalyzed by RuvA-RuvB allows RuvC to scan DNA until it finds its consensus sequence, where it cleaves and resolves the cruciform DNA. The protein is Crossover junction endodeoxyribonuclease RuvC of Petrotoga mobilis (strain DSM 10674 / SJ95).